A 455-amino-acid chain; its full sequence is Chromosomal replication initiator protein DnaA 2 (455 aa).

Positions 1 to 95 (MLTCNDCSTW…KRSSPLVTPS (95 aa)) are domain I, interacts with DnaA modulators. Residues 96–112 (IAKPATEVSEENKDFQL) form a domain II region. The interval 113–328 (KLNGAYRFDN…GAINKLTAYC (216 aa)) is domain III, AAA+ region. 4 residues coordinate ATP: G157, G159, K160, and T161. The domain IV, binds dsDNA stretch occupies residues 329-455 (LLFNKPLTET…IAIDSPQHFV (127 aa)).

Belongs to the DnaA family. Oligomerizes as a right-handed, spiral filament on DNA at oriC.

It localises to the cytoplasm. Plays an essential role in the initiation and regulation of chromosomal replication. ATP-DnaA binds to the origin of replication (oriC) to initiate formation of the DNA replication initiation complex once per cell cycle. Binds the DnaA box (a 9 base pair repeat at the origin) and separates the double-stranded (ds)DNA. Forms a right-handed helical filament on oriC DNA; dsDNA binds to the exterior of the filament while single-stranded (ss)DNA is stabiized in the filament's interior. The ATP-DnaA-oriC complex binds and stabilizes one strand of the AT-rich DNA unwinding element (DUE), permitting loading of DNA polymerase. After initiation quickly degrades to an ADP-DnaA complex that is not apt for DNA replication. Binds acidic phospholipids. In Chlamydia trachomatis serovar D (strain ATCC VR-885 / DSM 19411 / UW-3/Cx), this protein is Chromosomal replication initiator protein DnaA 2.